The following is a 2703-amino-acid chain: Serine/arginine repetitive matrix protein 2 (2703 aa).

N-acetylmethionine is present on M1. The stretch at 60–92 (HERKRRVELRCLELEEMMEEQGYEEQQIQEKVA) forms a coiled coil. Residue K101 is modified to N6-acetyllysine. Glycyl lysine isopeptide (Lys-Gly) (interchain with G-Cter in SUMO2) cross-links involve residues K108 and K130. The disordered stretch occupies residues 141–1007 (ISDSYVDGSS…SGSFHLCPGV (867 aa)). Y145 bears the Phosphotyrosine mark. K169 bears the N6-acetyllysine mark. Basic residues-rich tracts occupy residues 186-197 (KQKKKKKKKDRG) and 207-249 (RERK…KRSR). Residues 197–259 (GRRSESSSPR…STTPAPKSRR (63 aa)) are sufficient for RNA-binding. A phosphoserine mark is found at S220 and S222. The span at 263-284 (STSADSASSSDTSRSRSRSAAA) shows a compositional bias: low complexity. A phosphoserine mark is found at S295, S300, S310, S322, and S323. The span at 319–334 (QQPSSPAPSTKQSSSP) shows a compositional bias: low complexity. The span at 335–345 (YEDKDKKEKSA) shows a compositional bias: basic and acidic residues. 4 positions are modified to phosphoserine: S349, S351, S355, and S356. A phosphothreonine mark is found at T357 and T365. Phosphoserine occurs at positions 375, 385, 393, 396, 402, 406, 422, 433, 434, 435, 438, 452, 482, 484, 503, 505, 507, 531, 533, and 540. Residues 383 to 396 (PSSQEPVNPSSEAS) show a composition bias toward polar residues. The segment covering 425-437 (PTKGSRHASSSPE) has biased composition (polar residues). Over residues 459 to 533 (NRSHGRAKRD…SPQRRGRSRS (75 aa)) the composition is skewed to basic residues. The segment covering 534-543 (PQRPGWSRSR) has biased composition (low complexity). Composition is skewed to basic residues over residues 544 to 561 (NTQRRGRSRSARRGRSHS), 568 to 721 (GRSR…RRGR), and 730 to 740 (NKSRTSQRRSR). 3 positions are modified to phosphoserine: S700, S702, and S704. Phosphoserine is present on residues S773, S775, and S778. Low complexity predominate over residues 785–817 (SQTPTRRSRSGSSPPKQKSKTPPRQSRSNSPQP). A phosphoserine mark is found at S821 and S829. Composition is skewed to polar residues over residues 829–851 (SVTNMQADECTATPQRQSHSESS) and 859–874 (RTPSRQSCSGSSPRVK). T831 and T841 each carry phosphothreonine. Phosphoserine occurs at positions 846, 850, and 851. Low complexity-rich tracts occupy residues 875–891 (SSTPPRQSPSRSSSPQP) and 898–919 (SPRGRSHSSSSSPSPSRVTSRT). Phosphoserine occurs at positions 882, 909, 924, 926, 928, 940, 942, 944, 945, 946, and 949. T955 is subject to Phosphothreonine. Residues 960–1000 (SGSTSPYLKSMLQTPPDQNLSGSKSPCPQKSRDSPTGSSGS) show a composition bias toward polar residues. A phosphoserine mark is found at S962 and S964. Y966 is modified (phosphotyrosine). T973 carries the phosphothreonine modification. Phosphoserine occurs at positions 980, 984, and 993. Position 995 is a phosphothreonine (T995). Phosphoserine occurs at positions 997, 1000, 1011, 1037, and 1038. Polar residues predominate over residues 1024-1057 (VQQKGHTQTWPDTSSPEVMQTQVESPLLQSKSQT). The disordered stretch occupies residues 1024-1112 (VQQKGHTQTW…TKPDSSIYPL (89 aa)). A Phosphothreonine modification is found at T1044. Phosphoserine is present on residues S1048, S1064, S1066, S1067, and S1068. Residues 1058–1068 (SPKGSLSRSSS) are compositionally biased toward low complexity. T1071 bears the Phosphothreonine mark. Phosphoserine is present on residues S1077, S1087, S1094, S1097, S1117, S1151, S1159, S1175, S1188, S1216, S1225, S1229, S1230, S1269, S1276, S1278, S1284, S1287, S1294, S1305, S1325, S1338, S1339, S1340, S1343, S1359, and S1360. Positions 1079 to 1092 (VKQDKSEISTDPKL) are enriched in basic and acidic residues. The tract at residues 1136-2092 (IQEDVASSCI…RSPGMLEPLG (957 aa)) is disordered. The segment covering 1146-1158 (PRDKFSPTQDRPE) has biased composition (basic and acidic residues). Residues 1270–1284 (PEHKELSHSPPRENS) show a composition bias toward basic and acidic residues. Residues 1285-1304 (FESSLEFKNSGPVSEVNTGF) show a composition bias toward polar residues. T1370 carries the post-translational modification Phosphothreonine. The span at 1371-1387 (PSRERSSSASPELKDGL) shows a compositional bias: basic and acidic residues. Phosphoserine is present on residues S1372, S1378, and S1380. T1390 carries the phosphothreonine modification. The span at 1397–1408 (SGSSPGLRDGSG) shows a compositional bias: low complexity. Phosphoserine is present on residues S1400 and S1407. The residue at position 1409 (T1409) is a Phosphothreonine. Residues 1409-1431 (TPSRHSLSGSSPGMKDTPQTPSR) are compositionally biased toward polar residues. Phosphoserine is present on residues S1414, S1416, S1418, and S1419. Position 1428 is a phosphothreonine (T1428). A phosphoserine mark is found at S1438 and S1439. Position 1448 is a phosphothreonine (T1448). A phosphoserine mark is found at S1453, S1455, S1457, S1458, and S1465. The span at 1454-1468 (HSPSSPERNNKSVTP) shows a compositional bias: polar residues. T1467 carries the phosphothreonine modification. Phosphoserine occurs at positions 1473, 1475, 1477, and 1478. Residues 1475-1489 (SESSVEQKNLARTSP) show a composition bias toward polar residues. At T1487 the chain carries Phosphothreonine. Over residues 1490–1499 (GQRSRSGSSQ) the composition is skewed to low complexity. A phosphoserine mark is found at S1493, S1495, S1497, S1498, and S1508. Positions 1511–1523 (ERSESDSSPDSKP) are enriched in basic and acidic residues. Positions 1524 to 1533 (KTRTPLRQRS) are enriched in basic residues. S1533, S1535, S1537, S1538, S1554, S1556, S1557, S1572, S1576, S1577, S1604, S1614, S1647, S1649, and S1650 each carry phosphoserine. Residues 1604 to 1613 (SPEGSSSSES) show a composition bias toward low complexity. The segment covering 1637–1647 (KSHTPPRRRSS) has biased composition (basic residues). Phosphothreonine is present on T1654. 6 positions are modified to phosphoserine: S1683, S1685, S1687, S1688, S1718, and S1720. Basic residues-rich tracts occupy residues 1725 to 1745 (GLQRSRSRSRREKTRTTRRRD) and 1754 to 1772 (SRRRQRSRSRSRVTRRRRG). Phosphoserine is present on residues S1774, S1778, S1810, S1813, S1832, and S1834. Positions 1776-1789 (YHSRSPTRQESSRT) are enriched in low complexity. Basic residues predominate over residues 1790–1810 (SSRRRRGRSRTPLTSRKRSRS). Over residues 1818–2020 (KRSRSRASPA…PRAARGKRSL (203 aa)) the composition is skewed to basic residues. Position 1836 is a phosphothreonine (T1836). Phosphoserine occurs at positions 1840 and 1846. T1848 carries the phosphothreonine modification. 5 positions are modified to phosphoserine: S1849, S1869, S1872, S1876, and S1878. T1880 and T1884 each carry phosphothreonine. Phosphoserine is present on residues S1898 and S1900. Residues T1902 and T1906 each carry the phosphothreonine modification. Phosphoserine is present on residues S1910 and S1912. 2 positions are modified to phosphothreonine: T1914 and T1918. Residues S1922, S1924, and S1927 each carry the phosphoserine modification. T1930 carries the post-translational modification Phosphothreonine. Residues S1936, S1939, S1948, S1951, S1960, S1963, S1970, and S1972 each carry the phosphoserine modification. The residue at position 1974 (T1974) is a Phosphothreonine. Phosphoserine is present on residues S1982 and S1984. T1986 is modified (phosphothreonine). 4 positions are modified to phosphoserine: S1994, S1996, S1998, and S2019. T2021 bears the Phosphothreonine mark. Positions 2022-2047 (RSPPAIRRRSASGSSSDRSRSATPPA) are enriched in low complexity. 2 positions are modified to phosphoserine: S2023 and S2042. At T2044 the chain carries Phosphothreonine. Phosphoserine is present on residues S2052 and S2054. Residue T2056 is modified to Phosphothreonine. Residues 2062-2076 (SSSRMSCFSRPSMSP) show a composition bias toward low complexity. Phosphoserine is present on residues S2070, S2073, S2075, and S2084. T2096 carries the phosphothreonine modification. An omega-N-methylarginine mark is found at R2146, R2159, R2183, and R2198. Phosphoserine is present on S2224. 2 positions are modified to omega-N-methylarginine: R2226 and R2240. A phosphothreonine mark is found at T2241 and T2254. S2262 is modified (phosphoserine). A disordered region spans residues 2263–2703 (LTGSGTPPTA…SNRHRSSRSP (441 aa)). Residues T2268 and T2281 each carry the phosphothreonine modification. Polar residues predominate over residues 2269 to 2283 (PPTAANYPSSSRTPQ). R2295 is subject to Omega-N-methylarginine. Phosphoserine occurs at positions 2296, 2321, and 2329. T2334 is subject to Phosphothreonine. S2335 is subject to Phosphoserine. An Asymmetric dimethylarginine; alternate modification is found at R2337. R2337 carries the omega-N-methylarginine; alternate modification. A phosphoserine mark is found at S2347, S2351, and S2360. At T2362 the chain carries Phosphothreonine. Phosphoserine occurs at positions 2365, 2368, 2381, 2384, 2404, and 2408. Composition is skewed to polar residues over residues 2410–2443 (FSDQSRSVVQTTPVAGSQSLSSGTVAKSTSSASD) and 2467–2476 (TGAQQPSTLA). Over residues 2487-2521 (SSSSSSSSSSSSSSSSSSSSSSSSGSSSSDSEGSS) the composition is skewed to low complexity. Position 2535 is a phosphoserine (S2535). At T2537 the chain carries Phosphothreonine. A Glycyl lysine isopeptide (Lys-Gly) (interchain with G-Cter in SUMO2) cross-link involves residue K2541. T2553 is subject to Phosphothreonine. Low complexity predominate over residues 2562–2602 (SSSSSSSSSSSSSSSSSSSSSSSSSSSSSSSSSSSSSSSSS). A compositionally biased stretch (pro residues) spans 2605–2622 (PAKPGPQALPKPASPKKP). Phosphoserine is present on residues S2618, S2629, S2631, S2638, S2642, S2644, S2646, S2648, S2656, and S2660. Residues 2623 to 2643 (PPGERRSRSPRKPIDSLRDSR) show a composition bias toward basic and acidic residues. T2689 is modified (phosphothreonine). The residue at position 2691 (S2691) is a Phosphoserine. A compositionally biased stretch (basic residues) spans 2694–2703 (SNRHRSSRSP).

This sequence belongs to the CWC21 family. In terms of assembly, component of pre-catalytic, catalytic and post-catalytic spliceosome complexes. Found in a pre-mRNA splicing complex with SFRS4, SFRS5, SNRP70, SNRPA1, SRRM1 and SRRM2. Component of the minor spliceosome, which splices U12-type introns. Interacts with DHX8. Interacts with CACTIN.

The protein resides in the nucleus. It localises to the nucleus speckle. Functionally, required for pre-mRNA splicing as component of the spliceosome. As a component of the minor spliceosome, involved in the splicing of U12-type introns in pre-mRNAs. This Mus musculus (Mouse) protein is Serine/arginine repetitive matrix protein 2 (Srrm2).